Consider the following 457-residue polypeptide: Bifunctional protein GlmU (457 aa).

A pyrophosphorylase region spans residues 1–230 (MPLSLPLHIV…AQEVEGVNDL (230 aa)). Residues 12 to 15 (LAAG), Lys26, Gln78, 83 to 84 (GT), 105 to 107 (YGD), Gly140, Glu155, Asn170, and Asn228 contribute to the UDP-N-acetyl-alpha-D-glucosamine site. Asp107 is a Mg(2+) binding site. Residue Asn228 participates in Mg(2+) binding. The tract at residues 231-251 (WQLTQLERAWQIRAARALCLQ) is linker. Residues 252–457 (GARVADPARL…DGWQRPKKKT (206 aa)) form an N-acetyltransferase region. Residues Arg334 and Lys352 each contribute to the UDP-N-acetyl-alpha-D-glucosamine site. The active-site Proton acceptor is the His364. 2 residues coordinate UDP-N-acetyl-alpha-D-glucosamine: Tyr367 and Asn378. Residues Ala381, 387-388 (NY), Ser406, Ala424, and Arg441 each bind acetyl-CoA.

This sequence in the N-terminal section; belongs to the N-acetylglucosamine-1-phosphate uridyltransferase family. In the C-terminal section; belongs to the transferase hexapeptide repeat family. Homotrimer. Mg(2+) serves as cofactor.

The protein resides in the cytoplasm. It carries out the reaction alpha-D-glucosamine 1-phosphate + acetyl-CoA = N-acetyl-alpha-D-glucosamine 1-phosphate + CoA + H(+). It catalyses the reaction N-acetyl-alpha-D-glucosamine 1-phosphate + UTP + H(+) = UDP-N-acetyl-alpha-D-glucosamine + diphosphate. It functions in the pathway nucleotide-sugar biosynthesis; UDP-N-acetyl-alpha-D-glucosamine biosynthesis; N-acetyl-alpha-D-glucosamine 1-phosphate from alpha-D-glucosamine 6-phosphate (route II): step 2/2. The protein operates within nucleotide-sugar biosynthesis; UDP-N-acetyl-alpha-D-glucosamine biosynthesis; UDP-N-acetyl-alpha-D-glucosamine from N-acetyl-alpha-D-glucosamine 1-phosphate: step 1/1. Its pathway is bacterial outer membrane biogenesis; LPS lipid A biosynthesis. Catalyzes the last two sequential reactions in the de novo biosynthetic pathway for UDP-N-acetylglucosamine (UDP-GlcNAc). The C-terminal domain catalyzes the transfer of acetyl group from acetyl coenzyme A to glucosamine-1-phosphate (GlcN-1-P) to produce N-acetylglucosamine-1-phosphate (GlcNAc-1-P), which is converted into UDP-GlcNAc by the transfer of uridine 5-monophosphate (from uridine 5-triphosphate), a reaction catalyzed by the N-terminal domain. The sequence is that of Bifunctional protein GlmU from Xylella fastidiosa (strain M23).